The chain runs to 231 residues: Deoxyribose-phosphate aldolase (231 aa).

The active-site Proton donor/acceptor is the D86. Catalysis depends on K147, which acts as the Schiff-base intermediate with acetaldehyde. Residue K172 is the Proton donor/acceptor of the active site. Positions 206–231 are disordered; that stretch reads WQAETAGETVTEPESDRDGADTTDGY.

The protein belongs to the DeoC/FbaB aldolase family. DeoC type 1 subfamily.

The protein localises to the cytoplasm. The catalysed reaction is 2-deoxy-D-ribose 5-phosphate = D-glyceraldehyde 3-phosphate + acetaldehyde. Its pathway is carbohydrate degradation; 2-deoxy-D-ribose 1-phosphate degradation; D-glyceraldehyde 3-phosphate and acetaldehyde from 2-deoxy-alpha-D-ribose 1-phosphate: step 2/2. Catalyzes a reversible aldol reaction between acetaldehyde and D-glyceraldehyde 3-phosphate to generate 2-deoxy-D-ribose 5-phosphate. The chain is Deoxyribose-phosphate aldolase from Haloarcula marismortui (strain ATCC 43049 / DSM 3752 / JCM 8966 / VKM B-1809) (Halobacterium marismortui).